We begin with the raw amino-acid sequence, 284 residues long: 4-diphosphocytidyl-2-C-methyl-D-erythritol kinase (284 aa).

K14 is an active-site residue. Residue 97–107 (PMGGGVGGGSS) participates in ATP binding. D139 is a catalytic residue.

The protein belongs to the GHMP kinase family. IspE subfamily.

It catalyses the reaction 4-CDP-2-C-methyl-D-erythritol + ATP = 4-CDP-2-C-methyl-D-erythritol 2-phosphate + ADP + H(+). Its pathway is isoprenoid biosynthesis; isopentenyl diphosphate biosynthesis via DXP pathway; isopentenyl diphosphate from 1-deoxy-D-xylulose 5-phosphate: step 3/6. Its function is as follows. Catalyzes the phosphorylation of the position 2 hydroxy group of 4-diphosphocytidyl-2C-methyl-D-erythritol. The polypeptide is 4-diphosphocytidyl-2-C-methyl-D-erythritol kinase (Pseudoalteromonas translucida (strain TAC 125)).